The following is a 435-amino-acid chain: Glutamine synthetase (435 aa).

One can recognise a GS beta-grasp domain in the interval 12 to 94; that stretch reads KSIKYFMISY…VAADCVMDDR (83 aa). The region spanning 100 to 435 is the GS catalytic domain; sequence PRVVLKRLVA…QWERDSTLDI (336 aa). The Mg(2+) site is built by glutamate 123, glutamate 125, glutamate 180, and glutamate 187. Glycine 232 contributes to the L-glutamate binding site. Position 236 (histidine 236) interacts with Mg(2+). ATP is bound at residue serine 240. Arginine 291 and arginine 315 together coordinate L-glutamate. Positions 315 and 320 each coordinate ATP. Position 328 (glutamate 328) interacts with Mg(2+). Residue arginine 330 coordinates L-glutamate.

Belongs to the glutamine synthetase family. As to quaternary structure, homooctamer. The cofactor is Mg(2+).

It catalyses the reaction L-glutamate + NH4(+) + ATP = L-glutamine + ADP + phosphate + H(+). Its function is as follows. Catalyzes the ATP-dependent biosynthesis of glutamine from glutamate and ammonia. In Rhizobium leguminosarum bv. phaseoli, this protein is Glutamine synthetase.